A 266-amino-acid chain; its full sequence is Undecaprenyl-diphosphatase (266 aa).

Transmembrane regions (helical) follow at residues 1 to 21, 39 to 59, 87 to 107, 111 to 131, 144 to 164, 183 to 203, 218 to 238, and 244 to 264; these read METF…FLPI, QGLS…VIYF, WWII…KDFI, FRNT…LWAA, MGWK…IPGT, AAAR…ALLV, ALGL…HFFL, and IGMT…LGLL.

It belongs to the UppP family.

The protein localises to the cell inner membrane. It catalyses the reaction di-trans,octa-cis-undecaprenyl diphosphate + H2O = di-trans,octa-cis-undecaprenyl phosphate + phosphate + H(+). Catalyzes the dephosphorylation of undecaprenyl diphosphate (UPP). Confers resistance to bacitracin. The chain is Undecaprenyl-diphosphatase from Shewanella frigidimarina (strain NCIMB 400).